Reading from the N-terminus, the 238-residue chain is Xyloglucan-specific endo-beta-1,4-glucanase A (238 aa).

Residues 1-14 (MKLSLLSLATLASA) form the signal peptide.

The protein belongs to the glycosyl hydrolase 12 (cellulase H) family.

The protein localises to the secreted. It catalyses the reaction xyloglucan + H2O = xyloglucan oligosaccharides.. Its function is as follows. Catalyzes endohydrolysis of 1,4-beta-D-glucosidic linkages in xyloglucan with retention of the beta-configuration of the glycosyl residues. Specific for xyloglucan and does not hydrolyze other cell wall components. This Aspergillus aculeatus protein is Xyloglucan-specific endo-beta-1,4-glucanase A (xgeA).